A 47-amino-acid chain; its full sequence is RVCESQSHGFKGACTGDHNCALVCRNEGFSGGNCRGFRRRCFCTLKC.

Disulfide bonds link Cys-3–Cys-47, Cys-14–Cys-34, Cys-20–Cys-41, and Cys-24–Cys-43.

As to quaternary structure, monomer and homodimer.

Inhibits trypsin but not chymotrypsin. This Vigna unguiculata (Cowpea) protein is Defensin-like protein 1.